The following is a 452-amino-acid chain: Probable glycine dehydrogenase (decarboxylating) subunit 1 (452 aa).

The protein belongs to the GcvP family. N-terminal subunit subfamily. In terms of assembly, the glycine cleavage system is composed of four proteins: P, T, L and H. In this organism, the P 'protein' is a heterodimer of two subunits.

It catalyses the reaction N(6)-[(R)-lipoyl]-L-lysyl-[glycine-cleavage complex H protein] + glycine + H(+) = N(6)-[(R)-S(8)-aminomethyldihydrolipoyl]-L-lysyl-[glycine-cleavage complex H protein] + CO2. In terms of biological role, the glycine cleavage system catalyzes the degradation of glycine. The P protein binds the alpha-amino group of glycine through its pyridoxal phosphate cofactor; CO(2) is released and the remaining methylamine moiety is then transferred to the lipoamide cofactor of the H protein. The chain is Probable glycine dehydrogenase (decarboxylating) subunit 1 from Novosphingobium aromaticivorans (strain ATCC 700278 / DSM 12444 / CCUG 56034 / CIP 105152 / NBRC 16084 / F199).